We begin with the raw amino-acid sequence, 417 residues long: Serine hydroxymethyltransferase (417 aa).

(6S)-5,6,7,8-tetrahydrofolate contacts are provided by residues Leu-121 and 125–127; that span reads GHL. Position 229 is an N6-(pyridoxal phosphate)lysine (Lys-229). 355-357 lines the (6S)-5,6,7,8-tetrahydrofolate pocket; sequence SPF.

This sequence belongs to the SHMT family. Homodimer. The cofactor is pyridoxal 5'-phosphate.

The protein localises to the cytoplasm. It carries out the reaction (6R)-5,10-methylene-5,6,7,8-tetrahydrofolate + glycine + H2O = (6S)-5,6,7,8-tetrahydrofolate + L-serine. It participates in one-carbon metabolism; tetrahydrofolate interconversion. The protein operates within amino-acid biosynthesis; glycine biosynthesis; glycine from L-serine: step 1/1. In terms of biological role, catalyzes the reversible interconversion of serine and glycine with tetrahydrofolate (THF) serving as the one-carbon carrier. This reaction serves as the major source of one-carbon groups required for the biosynthesis of purines, thymidylate, methionine, and other important biomolecules. Also exhibits THF-independent aldolase activity toward beta-hydroxyamino acids, producing glycine and aldehydes, via a retro-aldol mechanism. The sequence is that of Serine hydroxymethyltransferase from Proteus mirabilis (strain HI4320).